A 236-amino-acid chain; its full sequence is Peptidase E (236 aa).

Catalysis depends on charge relay system residues Ser-122, Asp-137, and His-159.

It belongs to the peptidase S51 family.

The protein localises to the cytoplasm. The enzyme catalyses Dipeptidase E catalyzes the hydrolysis of dipeptides Asp-|-Xaa. It does not act on peptides with N-terminal Glu, Asn or Gln, nor does it cleave isoaspartyl peptides.. Its function is as follows. Hydrolyzes dipeptides containing N-terminal aspartate residues. May play a role in allowing the cell to use peptide aspartate to spare carbon otherwise required for the synthesis of the aspartate family of amino acids. This chain is Peptidase E, found in Shewanella putrefaciens (strain CN-32 / ATCC BAA-453).